Here is a 516-residue protein sequence, read N- to C-terminus: Calcitonin receptor (516 aa).

The first 24 residues, M1–Q24, serve as a signal peptide directing secretion. Topologically, residues A25–Y146 are extracellular. N28, N73, N125, and N130 each carry an N-linked (GlcNAc...) asparagine glycan. Disulfide bonds link C55-C81, C72-C112, and C95-C134. A helical membrane pass occupies residues V147–I169. Topologically, residues F170 to V181 are cytoplasmic. The helical transmembrane segment at T182–L202 threads the bilayer. Topologically, residues V203 to C256 are extracellular. C256 and C326 are oxidised to a cystine. The chain crosses the membrane as a helical span at residues K257 to I279. At Y280–L296 the chain is on the cytoplasmic side. A helical transmembrane segment spans residues R297–T317. Topologically, residues R318–H333 are extracellular. Residues L334 to V357 form a helical membrane-spanning segment. The Cytoplasmic segment spans residues R358 to K377. A helical transmembrane segment spans residues A378–F396. Over P397 to V404 the chain is Extracellular. A helical membrane pass occupies residues L405–C431. Residues N432–A516 lie on the Cytoplasmic side of the membrane. The tract at residues R489–A516 is disordered.

It belongs to the G-protein coupled receptor 2 family. As to quaternary structure, heterodimer of CALCR and RAMP1, RAMP2 or RAMP3; the receptor complexes function as AMYR1, AMYR2 and AMYR3 receptors, respectively, and respond to amylin/IAPP, calcitonin/CT and CGRP1 ligands. Interacts with GPRASP2.

It is found in the cell membrane. Functionally, g protein-coupled receptor activated by ligand peptides amylin (IAPP), calcitonin (CT/CALCA) and calcitonin gene-related peptide type 1 (CGRP1/CALCA). CALCR interacts with receptor-activity-modifying proteins RAMP1, 2 and 3 to form receptor complexes AMYR1, 2 and 3, respectively. IAPP, CT and CGRP1 activate CALCR and AMYRs with distinct modes of receptor activation resulting in specific phenotypes. Ligand binding causes a conformation change that triggers signaling via guanine nucleotide-binding proteins (G proteins) and modulates the activity of downstream effectors. Activates cAMP-dependent pathway. The polypeptide is Calcitonin receptor (Rattus norvegicus (Rat)).